Here is a 94-residue protein sequence, read N- to C-terminus: Small ribosomal subunit protein bS6 (94 aa).

It belongs to the bacterial ribosomal protein bS6 family.

Functionally, binds together with bS18 to 16S ribosomal RNA. The protein is Small ribosomal subunit protein bS6 of Alkaliphilus metalliredigens (strain QYMF).